Reading from the N-terminus, the 1214-residue chain is SWI/SNF complex subunit SMARCC2 (1214 aa).

Residues 1–274 are marR-like, BRCT and chromo domains module; that stretch reads MAVRKKDGGP…PVSRRKKISA (274 aa). The MarR-like domain occupies 10–136; that stretch reads PNVKYYEAAD…IEKSLVQNNC (127 aa). The BRCT; N-terminus domain maps to 140 to 183; the sequence is PNIFLCPEIEPKLLGKLKDIIKRHQGTVTEDKNNASHVVYPVPG. The region spanning 189 to 217 is the Chromo domain; that stretch reads EWVRPVMKRDKQVLLHWGYYPDSYDTWIP. One can recognise a BRCT; C-terminus domain in the interval 233–257; the sequence is KPRKVHAKWILDTDTFNEWMNEEDY. The tract at residues 257-413 is disordered; that stretch reads YEVNDDKNPV…GEQTKNPDLH (157 aa). The segment covering 275–284 has biased composition (polar residues); the sequence is KTLTDEVNSP. Serine 283, serine 286, serine 302, serine 304, and serine 306 each carry phosphoserine. Lysine 312 is subject to N6-(ADP-ribosyl)lysine. The residue at position 326 (lysine 326) is an N6-acetyllysine. Basic and acidic residues predominate over residues 331–344; that stretch reads HREEEQEDLTKDMD. Phosphoserine occurs at positions 347 and 387. A compositionally biased stretch (acidic residues) spans 379–398; it reads DLDEQEDESMETTGKDEDEN. One can recognise an SWIRM domain in the interval 424 to 521; it reads IIIPSYAAWF…YQVDAESRPT (98 aa). The residue at position 548 (threonine 548) is a Phosphothreonine. Residues lysine 564, lysine 566, lysine 568, and lysine 592 each participate in a glycyl lysine isopeptide (Lys-Gly) (interchain with G-Cter in SUMO2) cross-link. In terms of domain architecture, SANT spans 596–647; that stretch reads SATREWTEQETLLLLEALEMYKDDWNKVSEHVGSRTQDECILHFLRLPIEDP. Lysine 704 participates in a covalent cross-link: Glycyl lysine isopeptide (Lys-Gly) (interchain with G-Cter in SUMO2). The interval 724–852 is disordered; the sequence is KVTGKADPAF…GERKTKVERD (129 aa). 2 stretches are compositionally biased toward basic and acidic residues: residues 747-777 and 784-852; these read EPER…EPRE and EEAK…VERD. Lysine 787 is covalently cross-linked (Glycyl lysine isopeptide (Lys-Gly) (interchain with G-Cter in SUMO2)). A Phosphoserine modification is found at serine 813. Lysine 848 participates in a covalent cross-link: Glycyl lysine isopeptide (Lys-Gly) (interchain with G-Cter in SUMO2). Positions 907–934 form a coiled coil; sequence EELETIMDREREALEYQRQQLLADRQAF. Disordered stretches follow at residues 947–983, 997–1092, and 1182–1214; these read RQQH…PPAV, PAGS…PPPP, and LPSA…PPPQ. The span at 949-959 shows a compositional bias: low complexity; that stretch reads QHFQQMHQQQQ. Positions 960 to 974 are enriched in pro residues; the sequence is QPPPALPPGSQPIPP. Low complexity predominate over residues 997-1033; sequence PAGSGAPPGSLGPSEQIGQAGSTAGPQQQQPAGAPQP. Composition is skewed to pro residues over residues 1034 to 1051 and 1186 to 1202; these read GAVP…PSPF and SPLP…PTAP.

It belongs to the SMARCC family. Component of the multiprotein chromatin-remodeling complexes SWI/SNF: SWI/SNF-A (BAF), SWI/SNF-B (PBAF) and related complexes. The canonical complex contains a catalytic subunit (either SMARCA4/BRG1/BAF190A or SMARCA2/BRM/BAF190B) and at least SMARCE1, ACTL6A/BAF53, SMARCC1/BAF155, SMARCC2/BAF170, and SMARCB1/SNF5/BAF47. Other subunits specific to each of the complexes may also be present permitting several possible combinations developmentally and tissue specific. Component of the BAF complex, which includes at least actin (ACTB), ARID1A/BAF250A, ARID1B/BAF250B, SMARCA2/BRM, SMARCA4/BRG1, ACTL6A/BAF53, ACTL6B/BAF53B, SMARCE1/BAF57, SMARCC1/BAF155, SMARCC2/BAF170, SMARCB1/SNF5/INI1, and one or more SMARCD1/BAF60A, SMARCD2/BAF60B, or SMARCD3/BAF60C. In muscle cells, the BAF complex also contains DPF3. Component of neural progenitors-specific chromatin remodeling complex (npBAF complex) composed of at least, ARID1A/BAF250A or ARID1B/BAF250B, SMARCD1/BAF60A, SMARCD3/BAF60C, SMARCA2/BRM/BAF190B, SMARCA4/BRG1/BAF190A, SMARCB1/BAF47, SMARCC1/BAF155, SMARCE1/BAF57, SMARCC2/BAF170, PHF10/BAF45A, ACTL6A/BAF53A and actin. Component of neuron-specific chromatin remodeling complex (nBAF complex) composed of at least, ARID1A/BAF250A or ARID1B/BAF250B, SMARCD1/BAF60A, SMARCD3/BAF60C, SMARCA2/BRM/BAF190B, SMARCA4/BRG1/BAF190A, SMARCB1/BAF47, SMARCC1/BAF155, SMARCE1/BAF57, SMARCC2/BAF170, DPF1/BAF45B, DPF3/BAF45C, ACTL6B/BAF53B and actin. Component of the SWI/SNF-B (PBAF) chromatin remodeling complex, at least composed of SMARCA4/BRG1, SMARCB1/BAF47/SNF5, ACTL6A/BAF53A or ACTL6B/BAF53B, SMARCE1/BAF57, SMARCD1/BAF60A, SMARCD2/BAF60B, perhaps SMARCD3/BAF60C, SMARCC1/BAF155, SMARCC2/BAF170, PBRM1/BAF180, ARID2/BAF200 and actin. May also interact with the SIN3A histone deacetylase transcription repressor complex in conjunction with SMARCA2 and SMARCA4. Interacts with SMARD1. Interacts with KDM6B. Interaction with RCOR1. Interacts with DPF2. Interacts with ERCC6. Interacts with FOS. Post-translationally, mono-ADP-ribosylation at Lys-312 by SIRT6 promotes recruitment to the enhancer region of the Heme oxygenase-1 (HO-1) locus, leading to transcription activation of the locus. Ubiquitously expressed.

Its subcellular location is the nucleus. Its function is as follows. Involved in transcriptional activation and repression of select genes by chromatin remodeling (alteration of DNA-nucleosome topology). Component of SWI/SNF chromatin remodeling complexes that carry out key enzymatic activities, changing chromatin structure by altering DNA-histone contacts within a nucleosome in an ATP-dependent manner. Can stimulate the ATPase activity of the catalytic subunit of these complexes. May be required for CoREST dependent repression of neuronal specific gene promoters in non-neuronal cells. Belongs to the neural progenitors-specific chromatin remodeling complex (npBAF complex) and the neuron-specific chromatin remodeling complex (nBAF complex). During neural development a switch from a stem/progenitor to a postmitotic chromatin remodeling mechanism occurs as neurons exit the cell cycle and become committed to their adult state. The transition from proliferating neural stem/progenitor cells to postmitotic neurons requires a switch in subunit composition of the npBAF and nBAF complexes. As neural progenitors exit mitosis and differentiate into neurons, npBAF complexes which contain ACTL6A/BAF53A and PHF10/BAF45A, are exchanged for homologous alternative ACTL6B/BAF53B and DPF1/BAF45B or DPF3/BAF45C subunits in neuron-specific complexes (nBAF). The npBAF complex is essential for the self-renewal/proliferative capacity of the multipotent neural stem cells. The nBAF complex along with CREST plays a role regulating the activity of genes essential for dendrite growth. Critical regulator of myeloid differentiation, controlling granulocytopoiesis and the expression of genes involved in neutrophil granule formation. This chain is SWI/SNF complex subunit SMARCC2 (SMARCC2), found in Homo sapiens (Human).